Consider the following 126-residue polypeptide: Holo-[acyl-carrier-protein] synthase (126 aa).

2 residues coordinate Mg(2+): aspartate 9 and glutamate 58.

It belongs to the P-Pant transferase superfamily. AcpS family. The cofactor is Mg(2+).

The protein localises to the cytoplasm. The enzyme catalyses apo-[ACP] + CoA = holo-[ACP] + adenosine 3',5'-bisphosphate + H(+). Functionally, transfers the 4'-phosphopantetheine moiety from coenzyme A to a Ser of acyl-carrier-protein. In Escherichia coli (strain K12 / MC4100 / BW2952), this protein is Holo-[acyl-carrier-protein] synthase.